We begin with the raw amino-acid sequence, 64 residues long: Large ribosomal subunit protein bL35 (64 aa).

Basic residues predominate over residues 22–31 (GKVKHGHAYR). Residues 22–64 (GKVKHGHAYRSHLAQSKTTKQKRQSRKSTLMNNSDFKRLKKLI) form a disordered region.

Belongs to the bacterial ribosomal protein bL35 family.

The chain is Large ribosomal subunit protein bL35 from Mesomycoplasma hyopneumoniae (strain 232) (Mycoplasma hyopneumoniae).